Here is a 415-residue protein sequence, read N- to C-terminus: UDP-N-acetylmuramoylalanine--D-glutamate ligase (415 aa).

91–97 (GTDGKST) contacts ATP.

It belongs to the MurCDEF family.

Its subcellular location is the cytoplasm. It catalyses the reaction UDP-N-acetyl-alpha-D-muramoyl-L-alanine + D-glutamate + ATP = UDP-N-acetyl-alpha-D-muramoyl-L-alanyl-D-glutamate + ADP + phosphate + H(+). The protein operates within cell wall biogenesis; peptidoglycan biosynthesis. In terms of biological role, cell wall formation. Catalyzes the addition of glutamate to the nucleotide precursor UDP-N-acetylmuramoyl-L-alanine (UMA). The chain is UDP-N-acetylmuramoylalanine--D-glutamate ligase from Aquifex aeolicus (strain VF5).